The chain runs to 89 residues: Arminin 375 (89 aa).

The first 18 residues, 1-18 (MKAVFAILFLAFIALTYA), serve as a signal peptide directing secretion. Positions 19-57 (KSYDEVKEEIKNEVEREIFEDLEEESDELDNYVEESNDA) are excised as a propeptide. At A86 the chain carries Alanine amide.

It belongs to the arminin family. Expressed in entodermal epithelium along the body column.

The protein localises to the secreted. It localises to the target cell membrane. Its function is as follows. Antimicrobial peptide with a broad-spectrum antimicrobial activity. Keeps its antibacterial activity under a wide range of salt concentrations that mimic physiological conditions of human blood, which is surprising, since Hydra is an obligate freshwater animal with nearly no salt tolerance. Does not affect red blood cells. The protein is Arminin 375 of Hydra oligactis (Brown hydra).